Reading from the N-terminus, the 274-residue chain is Diaminopimelate epimerase (274 aa).

Substrate contacts are provided by Asn13, Gln45, and Asn63. The active-site Proton donor is Cys72. Residues 73-74 (GN), Asn158, Asn191, and 209-210 (ER) contribute to the substrate site. Cys218 functions as the Proton acceptor in the catalytic mechanism. Substrate is bound at residue 219-220 (GT).

The protein belongs to the diaminopimelate epimerase family. As to quaternary structure, homodimer.

It is found in the cytoplasm. The catalysed reaction is (2S,6S)-2,6-diaminopimelate = meso-2,6-diaminopimelate. It participates in amino-acid biosynthesis; L-lysine biosynthesis via DAP pathway; DL-2,6-diaminopimelate from LL-2,6-diaminopimelate: step 1/1. Its function is as follows. Catalyzes the stereoinversion of LL-2,6-diaminopimelate (L,L-DAP) to meso-diaminopimelate (meso-DAP), a precursor of L-lysine and an essential component of the bacterial peptidoglycan. This is Diaminopimelate epimerase from Pelagibacter ubique (strain HTCC1062).